The chain runs to 217 residues: Adenosylcobinamide-GDP ribazoletransferase (217 aa).

5 helical membrane passes run 6–26 (ALLSFFTIIPAGVAKLDFKCA), 39–61 (GPAAAALWLGASPHVAYLLLLLM), 95–115 (GTGGIFAVVATYAVATASTAS), 116–136 (PLQLLLAEVFSKALIVTVAAF), and 162–182 (ALAVIICLRPAATLAALAVAL).

The protein belongs to the CobS family. Mg(2+) serves as cofactor.

It is found in the cell membrane. The catalysed reaction is alpha-ribazole + adenosylcob(III)inamide-GDP = adenosylcob(III)alamin + GMP + H(+). The enzyme catalyses alpha-ribazole 5'-phosphate + adenosylcob(III)inamide-GDP = adenosylcob(III)alamin 5'-phosphate + GMP + H(+). It functions in the pathway cofactor biosynthesis; adenosylcobalamin biosynthesis; adenosylcobalamin from cob(II)yrinate a,c-diamide: step 7/7. Its function is as follows. Joins adenosylcobinamide-GDP and alpha-ribazole to generate adenosylcobalamin (Ado-cobalamin). Also synthesizes adenosylcobalamin 5'-phosphate from adenosylcobinamide-GDP and alpha-ribazole 5'-phosphate. This Pyrobaculum calidifontis (strain DSM 21063 / JCM 11548 / VA1) protein is Adenosylcobinamide-GDP ribazoletransferase.